The primary structure comprises 99 residues: Bombyxin A-1 homolog (99 aa).

An N-terminal signal peptide occupies residues 1 to 19 (MKTQVLFLVFALAAVMVSG). Disulfide bonds link Cys27–Cys86, Cys39–Cys99, and Cys85–Cys90. Positions 48–76 (TPYISPENEGYGWRWLEPQRARQLDGARG) are cleaved as a propeptide — c peptide like.

It belongs to the insulin family. Heterodimer of a B chain and an A chain linked by two disulfide bonds.

The protein resides in the secreted. Functionally, brain peptide responsible for activation of prothoracic glands to produce ecdysone in insects. This Samia cynthia (Ailanthus silkmoth) protein is Bombyxin A-1 homolog (SBXA1).